A 266-amino-acid polypeptide reads, in one-letter code: Indole-3-glycerol phosphate synthase (266 aa).

The protein belongs to the TrpC family.

The enzyme catalyses 1-(2-carboxyphenylamino)-1-deoxy-D-ribulose 5-phosphate + H(+) = (1S,2R)-1-C-(indol-3-yl)glycerol 3-phosphate + CO2 + H2O. The protein operates within amino-acid biosynthesis; L-tryptophan biosynthesis; L-tryptophan from chorismate: step 4/5. This chain is Indole-3-glycerol phosphate synthase, found in Acidovorax sp. (strain JS42).